The chain runs to 610 residues: Protein Smaug homolog 1 (610 aa).

Phosphoserine is present on S67. 3 disordered regions span residues 177-222, 318-366, and 464-487; these read ARGP…EEGS, SSPS…LQPP, and NRGF…GRRN. Residues 222–295 enclose the SAM domain; it reads SGMKDVPAWL…LKSLERDIIE (74 aa). S319 carries the phosphoserine modification. The residue at position 323 (T323) is a Phosphothreonine. A compositionally biased stretch (low complexity) spans 344–358; sequence SAATVTSATASASAG. R465 carries the post-translational modification Omega-N-methylarginine. A compositionally biased stretch (polar residues) spans 467 to 480; it reads FGQSNSLPTASSVG. S472 is modified (phosphoserine).

Belongs to the SMAUG family. In terms of tissue distribution, expressed in brain (at protein level).

It is found in the cytoplasm. The protein resides in the cell projection. The protein localises to the dendrite. It localises to the synapse. Its subcellular location is the synaptosome. Acts as a translational repressor of SRE-containing messengers. The protein is Protein Smaug homolog 1 (Samd4a) of Rattus norvegicus (Rat).